Consider the following 416-residue polypeptide: MALVLHCGSGNKNAFKALIAAEYTGVKVELTKNFEMGVSNKTPEFLKMNPLGKIPVLETPEGAVFESNAIARYVARLKDNSSLCGSSLIDYSHIEQWMDFSATEVDANIGRWLYPRLGFGPYVPVLEEFAITSLKRSLGALNTHLASNTYLVGHSVTLADIVMTCNLYYGFVRILIKSFTSEFPHVERYFWTMVNQPNFKKVIGDFKQAESVPPVQKKAAPPKESKAKEAKKEAPKEAPKPKVEASEEEEAPKPKPKNPLDLLPPSKMILDEWKRLYSNTKTNFREIAIKGFWDMYDPEGYSLWFCDYKYNDENTVSFVTMNKVGGFLQRMDLCRKYAFGKMLVIGSTPPFKVKGLWLFRGQDIPKFVMDEVYDMELYEWTKVDLSDEAQKERVNAMIEDQEPFEGEDLLDAKCFK.

In terms of domain architecture, GST N-terminal spans 1–82; it reads MALVLHCGSG…YVARLKDNSS (82 aa). Positions 87-215 constitute a GST C-terminal domain; that stretch reads SLIDYSHIEQ…FKQAESVPPV (129 aa). Residues 213–263 form a disordered region; the sequence is PPVQKKAAPPKESKAKEAKKEAPKEAPKPKVEASEEEEAPKPKPKNPLDLL. Residues 221–245 are compositionally biased toward basic and acidic residues; that stretch reads PPKESKAKEAKKEAPKEAPKPKVEA. Residues 256-416 form the EF-1-gamma C-terminal domain; it reads PKNPLDLLPP…EDLLDAKCFK (161 aa).

As to quaternary structure, EF-1 is composed of four subunits: alpha, beta, delta, and gamma.

Its function is as follows. Probably plays a role in anchoring the complex to other cellular components. The chain is Elongation factor 1-gamma 3 from Oryza sativa subsp. japonica (Rice).